The chain runs to 68 residues: Medusin-AS (68 aa).

Residues 1–22 form the signal peptide; sequence MAFLKKSLFLVLFLGLVSLSVC. Residues 23–49 constitute a propeptide that is removed on maturation; it reads EEEKRESEEEKNEQEEDDRDERSEEKR. A disordered region spans residues 24 to 46; sequence EEKRESEEEKNEQEEDDRDERSE. Residues 31 to 41 are compositionally biased toward acidic residues; the sequence is EEKNEQEEDDR. Leu-67 carries the leucine amide modification.

The protein belongs to the frog skin active peptide (FSAP) family. Medusin subfamily. Expressed by the skin glands.

It localises to the secreted. In terms of biological role, antimicrobial peptide active against Gram-positive bacteria and fungi but inactive against Gram-negative bacteria. Also inhibits growth of B.dendrobatidis zoospores at high concentrations. Shows anticancer activities. Shows hemolytic activity. This is Medusin-AS from Agalychnis spurrelli (Gliding leaf frog).